The chain runs to 430 residues: Histidine--tRNA ligase (430 aa).

The protein belongs to the class-II aminoacyl-tRNA synthetase family. As to quaternary structure, homodimer.

Its subcellular location is the cytoplasm. The catalysed reaction is tRNA(His) + L-histidine + ATP = L-histidyl-tRNA(His) + AMP + diphosphate + H(+). In Chlorobaculum parvum (strain DSM 263 / NCIMB 8327) (Chlorobium vibrioforme subsp. thiosulfatophilum), this protein is Histidine--tRNA ligase.